We begin with the raw amino-acid sequence, 130 residues long: Small ribosomal subunit protein uS8 (130 aa).

This sequence belongs to the universal ribosomal protein uS8 family.

This is Small ribosomal subunit protein uS8 (RPS22) from Kluyveromyces marxianus (Yeast).